Here is a 356-residue protein sequence, read N- to C-terminus: Butyrate kinase (356 aa).

This sequence belongs to the acetokinase family.

It is found in the cytoplasm. It carries out the reaction butanoate + ATP = butanoyl phosphate + ADP. It functions in the pathway lipid metabolism; butanoate metabolism. Catalyzes the conversion of butyryl-CoA through butyryl phosphate to butyrate. This is Butyrate kinase from Clostridium tetani (strain Massachusetts / E88).